The sequence spans 433 residues: MAAHIALIAHDNKKDALVNFVQQHKSLFSRYDLIATGQTGELVRNKTGLAVDTVFSGPLGGDTQIATQIIDGTIAAVIFLIDPLYAQPHEPDIRTLLRLCEVYNVPLAINLATAKAVIKLLGKTKTGHLIFNPVAGQGNVERELDLIKEHLQSEINLKITFTSAEVNVTDQAKEIVKRIKQANEQSDGEGDSFIIASGGDGTVSGVAAALVNTGIPLGIIPRGTANAFSVALGIPTQIPGACQTINRGITKVVDTALCNDIPMLLLAGVGFEAEMVEKADRELKNNLGVMAYIFAGIQQAREQELFEAHIEIDSETTTMEASAITIANAAPPTSVFAQGAGQVSFTDGLLDITVASSQTALQGLQVVTNLFTSALSKNPSDNENVLHLYGESIKVTTSPPQKIVVDGEIIGTTPVEVKCLPKSLNIFAPVENS.

The tract at residues 1–126 is methylglyoxal synthase; the sequence is MAAHIALIAH…VIKLLGKTKT (126 aa). In terms of domain architecture, MGS-like spans 1–145; the sequence is MAAHIALIAH…GQGNVERELD (145 aa). Asp62 is an active-site residue. The region spanning 127–262 is the DAGKc domain; the sequence is GHLIFNPVAG…VDTALCNDIP (136 aa).

It in the N-terminal section; belongs to the methylglyoxal synthase family.

This is an uncharacterized protein from Synechocystis sp. (strain ATCC 27184 / PCC 6803 / Kazusa).